We begin with the raw amino-acid sequence, 189 residues long: Peptidyl-tRNA hydrolase (189 aa).

Tyrosine 15 lines the tRNA pocket. Histidine 20 functions as the Proton acceptor in the catalytic mechanism. TRNA is bound by residues phenylalanine 66, asparagine 68, and asparagine 114.

It belongs to the PTH family. As to quaternary structure, monomer.

It is found in the cytoplasm. It catalyses the reaction an N-acyl-L-alpha-aminoacyl-tRNA + H2O = an N-acyl-L-amino acid + a tRNA + H(+). Hydrolyzes ribosome-free peptidyl-tRNAs (with 1 or more amino acids incorporated), which drop off the ribosome during protein synthesis, or as a result of ribosome stalling. Its function is as follows. Catalyzes the release of premature peptidyl moieties from peptidyl-tRNA molecules trapped in stalled 50S ribosomal subunits, and thus maintains levels of free tRNAs and 50S ribosomes. This is Peptidyl-tRNA hydrolase from Streptococcus pneumoniae (strain P1031).